Consider the following 117-residue polypeptide: Biogenesis of lysosome-related organelles complex 1 subunit BLS1 (117 aa).

The interval 97–117 (EGKAQDTEQAPGKGDRIFRSD) is disordered.

It belongs to the BLOC1S1 family. As to quaternary structure, component of the biogenesis of lysosome-related organelles complex-1 (BLOC-1).

It localises to the endosome. Its function is as follows. Component of the biogenesis of lysosome-related organelles complex-1 (BLOC-1), a complex involved in endosomal cargo sorting. The polypeptide is Biogenesis of lysosome-related organelles complex 1 subunit BLS1 (BLS1) (Eremothecium gossypii (strain ATCC 10895 / CBS 109.51 / FGSC 9923 / NRRL Y-1056) (Yeast)).